Here is a 111-residue protein sequence, read N- to C-terminus: Cell cycle protein GpsB (111 aa).

Positions 38 to 72 (IKDYEAFHKEFDQLKQQNARLKRELEEQKVAATQV) form a coiled coil.

The protein belongs to the GpsB family. In terms of assembly, forms polymers through the coiled coil domains. Interacts with PBP1, MreC and EzrA.

It is found in the cytoplasm. Divisome component that associates with the complex late in its assembly, after the Z-ring is formed, and is dependent on DivIC and PBP2B for its recruitment to the divisome. Together with EzrA, is a key component of the system that regulates PBP1 localization during cell cycle progression. Its main role could be the removal of PBP1 from the cell pole after pole maturation is completed. Also contributes to the recruitment of PBP1 to the division complex. Not essential for septum formation. This Bacillus mycoides (strain KBAB4) (Bacillus weihenstephanensis) protein is Cell cycle protein GpsB.